A 147-amino-acid chain; its full sequence is MVHLTSEEKNCITTIWSKVQVDQTGGEALGRMLVVYPWTTRFFGSFGDLSSPGAVMSNSKVQAHGAKVLTSFGEAVKHLDNLKGTYAKLSELHCDKLHVDPENFKMLGNIIVICLAEHFGKDFTPECQVAWQKLVAGVAHALAHKYH.

V2 is subject to N-acetylvaline. Positions 3–147 constitute a Globin domain; the sequence is HLTSEEKNCI…VAHALAHKYH (145 aa). T13 is modified (phosphothreonine). S45 is subject to Phosphoserine. N6-acetyllysine is present on K60. Residue H64 participates in heme b binding. Residue K83 is modified to N6-acetyllysine. Heme b is bound at residue H93. C94 carries the S-nitrosocysteine modification. Position 145 is an N6-acetyllysine (K145).

This sequence belongs to the globin family. Heterotetramer of two alpha chains and two beta chains. As to expression, red blood cells.

Involved in oxygen transport from the lung to the various peripheral tissues. This chain is Hemoglobin subunit beta-M (HBB), found in Didelphis virginiana (North American opossum).